The sequence spans 734 residues: Oligopeptide transporter 2 (734 aa).

14 helical membrane-spanning segments follow: residues 44-64 (MWFL…FFGY), 68-88 (PLMI…KLMA), 125-145 (GAGF…IMAF), 152-172 (FLAS…WAGI), 211-231 (FFVI…YLFL), 252-272 (LGSG…SVIA), 283-303 (FFAI…VIPI), 359-379 (FFAI…THVA), 414-434 (WWFY…CIFM), 442-462 (WWGL…VSII), 525-545 (MFLV…SVAW), 596-616 (YPAL…VWLL), 644-664 (ATSV…YFVF), and 677-697 (VLSA…YFSL).

This sequence belongs to the oligopeptide OPT transporter (TC 2.A.67.1) family. In terms of tissue distribution, expressed in flowers, leaves, roots, and stems.

The protein resides in the membrane. Functionally, involved in the translocation of tetra- and pentapeptides across the cellular membrane in an energy-dependent manner. The sequence is that of Oligopeptide transporter 2 (OPT2) from Arabidopsis thaliana (Mouse-ear cress).